The sequence spans 334 residues: Ornithine carbamoyltransferase subunit I (334 aa).

Residues 56-59 (STRT), glutamine 83, arginine 107, and 134-137 (HPTQ) contribute to the carbamoyl phosphate site. Residues asparagine 168, aspartate 232, and 236–237 (SM) each bind L-ornithine. Cysteine 274 contributes to the Zn(2+) binding site. Carbamoyl phosphate-binding positions include 274–275 (CL) and arginine 320.

It belongs to the aspartate/ornithine carbamoyltransferase superfamily. OTCase family. In E.coli strain K12, trimer of identical or non-identical chains are composed of ArgI (I) and/or ArgF (F). The trimer has the following composition: FFI, FFF, FII, III. E.coli strains B and W, which are known to contain only ArgI, produce only a trimer of identical chains (III).

It is found in the cytoplasm. The catalysed reaction is carbamoyl phosphate + L-ornithine = L-citrulline + phosphate + H(+). It participates in amino-acid biosynthesis; L-arginine biosynthesis; L-arginine from L-ornithine and carbamoyl phosphate: step 1/3. Its activity is regulated as follows. Reversely inhibited by N-(N-Sulfodiaminophosphinyl)-L-ornithine. Zinc is an allosteric regulator of the substrate-bound enzyme and a competitive inhibitor of the free enzyme. In terms of biological role, reversibly catalyzes the transfer of the carbamoyl group from carbamoyl phosphate (CP) to the N(epsilon) atom of ornithine (ORN) to produce L-citrulline, which is a substrate for argininosuccinate synthetase, the enzyme involved in the final step in arginine biosynthesis. The polypeptide is Ornithine carbamoyltransferase subunit I (Escherichia coli (strain K12)).